Consider the following 407-residue polypeptide: Na(+)-translocating NADH-quinone reductase subunit F (407 aa).

The helical transmembrane segment at 3–23 threads the bilayer; that stretch reads IILGVVMFTLIVLALVLVILF. The 2Fe-2S ferredoxin-type domain maps to 32-126; the sequence is GDITISINGD…DMDIELPEEI (95 aa). [2Fe-2S] cluster-binding residues include Cys69, Cys75, Cys78, and Cys110. The FAD-binding FR-type domain maps to 129-269; that stretch reads VKKWECTVIS…SGPFGEFFAK (141 aa). Positions 272–389 are catalytic; that stretch reads DAEMVFIGGG…PMMNAAVIGM (118 aa).

This sequence belongs to the NqrF family. As to quaternary structure, composed of six subunits; NqrA, NqrB, NqrC, NqrD, NqrE and NqrF. [2Fe-2S] cluster serves as cofactor. Requires FAD as cofactor.

The protein localises to the cell inner membrane. It catalyses the reaction a ubiquinone + n Na(+)(in) + NADH + H(+) = a ubiquinol + n Na(+)(out) + NAD(+). Functionally, NQR complex catalyzes the reduction of ubiquinone-1 to ubiquinol by two successive reactions, coupled with the transport of Na(+) ions from the cytoplasm to the periplasm. The first step is catalyzed by NqrF, which accepts electrons from NADH and reduces ubiquinone-1 to ubisemiquinone by a one-electron transfer pathway. In Vibrio anguillarum (Listonella anguillarum), this protein is Na(+)-translocating NADH-quinone reductase subunit F.